Consider the following 330-residue polypeptide: Aspartate--ammonia ligase (330 aa).

The protein belongs to the class-II aminoacyl-tRNA synthetase family. AsnA subfamily.

The protein localises to the cytoplasm. The catalysed reaction is L-aspartate + NH4(+) + ATP = L-asparagine + AMP + diphosphate + H(+). It participates in amino-acid biosynthesis; L-asparagine biosynthesis; L-asparagine from L-aspartate (ammonia route): step 1/1. The chain is Aspartate--ammonia ligase from Haemophilus influenzae (strain PittEE).